The primary structure comprises 300 residues: E3 ubiquitin-protein ligase RNF212B (300 aa).

Residues 6–40 (CNQCFRKDGAHFFVTSCGHIFCKKCVTLEKCAVCG) form an RING-type zinc finger. A coiled-coil region spans residues 87–124 (LLIAFYKHRITKLETAMQEAQQALVSQDKELSVLRKEN). The disordered stretch occupies residues 141-232 (YQGSRSITPR…SYRTSSASSG (92 aa)). Over residues 155–165 (TSPSQSVTPRP) the composition is skewed to polar residues. A compositionally biased stretch (low complexity) spans 166 to 182 (SFQHSSQVVSRSSSAES). Gly residues predominate over residues 191–200 (GSLGQGGRGL). Over residues 211-232 (NETPSPASTHSLSYRTSSASSG) the composition is skewed to polar residues.

In terms of assembly, homodimer. Autoubiquitinated.

The protein localises to the chromosome. The catalysed reaction is S-ubiquitinyl-[E2 ubiquitin-conjugating enzyme]-L-cysteine + [acceptor protein]-L-lysine = [E2 ubiquitin-conjugating enzyme]-L-cysteine + N(6)-ubiquitinyl-[acceptor protein]-L-lysine.. It participates in protein modification; protein ubiquitination. Ubiquitin E3 ligase that acts as a crucial factor for crossing-over (CO) formation during meiosis. Essential for normal prophase I progression and for ensuring appropriate CO designation in meiosis. Recruits key components of the cross-over machinery either directly ou indirectly, leading to the activation of the MutL-gamma complex. The function of RNF212B in CO designation is dependent on its catalytic activity. The polypeptide is E3 ubiquitin-protein ligase RNF212B (RNF212B) (Homo sapiens (Human)).